We begin with the raw amino-acid sequence, 408 residues long: Imidazolonepropionase (408 aa).

Fe(3+) is bound by residues histidine 72 and histidine 74. Histidine 72 and histidine 74 together coordinate Zn(2+). 4-imidazolone-5-propanoate-binding residues include arginine 81, tyrosine 144, and histidine 177. Tyrosine 144 is an N-formimidoyl-L-glutamate binding site. Histidine 242 lines the Fe(3+) pocket. Residue histidine 242 coordinates Zn(2+). Residue glutamine 245 participates in 4-imidazolone-5-propanoate binding. Residue aspartate 317 participates in Fe(3+) binding. Aspartate 317 is a binding site for Zn(2+). Positions 319 and 321 each coordinate N-formimidoyl-L-glutamate. Threonine 322 is a 4-imidazolone-5-propanoate binding site.

This sequence belongs to the metallo-dependent hydrolases superfamily. HutI family. Zn(2+) serves as cofactor. Requires Fe(3+) as cofactor.

Its subcellular location is the cytoplasm. The catalysed reaction is 4-imidazolone-5-propanoate + H2O = N-formimidoyl-L-glutamate. It functions in the pathway amino-acid degradation; L-histidine degradation into L-glutamate; N-formimidoyl-L-glutamate from L-histidine: step 3/3. Functionally, catalyzes the hydrolytic cleavage of the carbon-nitrogen bond in imidazolone-5-propanoate to yield N-formimidoyl-L-glutamate. It is the third step in the universal histidine degradation pathway. This is Imidazolonepropionase from Aliivibrio fischeri (strain MJ11) (Vibrio fischeri).